A 128-amino-acid chain; its full sequence is Small ribosomal subunit protein eS8 (128 aa).

This sequence belongs to the eukaryotic ribosomal protein eS8 family. In terms of assembly, part of the 30S ribosomal subunit.

This Methanococcus aeolicus (strain ATCC BAA-1280 / DSM 17508 / OCM 812 / Nankai-3) protein is Small ribosomal subunit protein eS8.